Consider the following 382-residue polypeptide: Phenylalanine dehydrogenase (382 aa).

R54 provides a ligand contact to NAD(+). L-phenylalanine is bound at residue K78. Residue K90 is the Proton donor/acceptor of the active site. Residues D125, S156, T160, 190–196 (GLGKVGY), 213–214 (DI), 253–254 (AF), and 274–276 (SAN) contribute to the NAD(+) site. N276 provides a ligand contact to L-phenylalanine.

This sequence belongs to the Glu/Leu/Phe/Val dehydrogenases family.

It catalyses the reaction L-phenylalanine + NAD(+) + H2O = 3-phenylpyruvate + NH4(+) + NADH + H(+). With respect to regulation, activity is not affected by the metal chelating agent EDTA. Addition of 1 mM Mg(2+) results in 15% increase in activity, while the enzyme is strongly inhibited by 1 mM Fe(3+), Fe(2+), Cu(2+), Zn(2+) and Ag(+). In terms of biological role, catalyzes the reversible NAD(+)-dependent oxidative deamination of L-phenylalanine to phenylpyruvate. Can also catalyze the oxidative deamination of several other amino acids, with much lower efficiency. Shows activity towards various bulky aromatic alpha-keto acids/esters and (S)-amine alcohols. Can catalyze the amination of 3-(2-chlorophenyl)-2-oxopropionic acid (CPOA) to produce 2-chloro-L-phenylalanine (2-Cl-Phe), a chemical compound used in the pharmaceutical and biotechnology industries. Shows a preference for amination over deamination. The protein is Phenylalanine dehydrogenase of Bacillus thermotolerans (Quasibacillus thermotolerans).